The following is a 114-amino-acid chain: UPF0145 protein YG5714_0873 (114 aa).

Belongs to the UPF0145 family.

This chain is UPF0145 protein YG5714_0873, found in Saccharolobus islandicus (strain Y.G.57.14 / Yellowstone #1) (Sulfolobus islandicus).